The sequence spans 971 residues: Translation initiation factor IF-2 (971 aa).

Basic and acidic residues predominate over residues 49–63; it reads HLRKSHGATDGDKRK. Disordered stretches follow at residues 49-86 and 101-385; these read HLRK…ARTI and DVAE…APTE. Residues 105–114 are compositionally biased toward low complexity; sequence GAEQGQAQVA. Residues 121–177 are compositionally biased toward basic and acidic residues; that stretch reads ELKRREEEARREAELLEKQAQELRERQERLEREEAERRAREEAAEAQRRRAEEEAAA. A compositionally biased stretch (low complexity) spans 178-209; sequence KRAAAAAVEAQQVAAQQAAEAQQETAGAQSAQ. Residues 210 to 261 are compositionally biased toward basic and acidic residues; sequence DEARAAAERAAQREAAKKAEDAAREAADKTRAEQEEIRKRREAAEAEARAIR. The segment covering 277 to 286 has biased composition (pro residues); sequence PPKPVEPPKP. Residues 298-325 are compositionally biased toward low complexity; it reads KPAGASAARPAVKKPAGAAPATTAPAGA. Residues 355-368 show a composition bias toward gly residues; sequence SSGGVDRGWRGGPK. The region spanning 471–640 is the tr-type G domain; the sequence is PRPPVVTVMG…LLQAEVLELK (170 aa). Residues 480 to 487 form a G1 region; it reads GHVDHGKT. 480 to 487 lines the GTP pocket; it reads GHVDHGKT. A G2 region spans residues 505–509; sequence GITQH. Residues 526-529 form a G3 region; sequence DTPG. GTP-binding positions include 526–530 and 580–583; these read DTPGH and NKID. Residues 580–583 are G4; that stretch reads NKID. A G5 region spans residues 616 to 618; the sequence is SAK.

The protein belongs to the TRAFAC class translation factor GTPase superfamily. Classic translation factor GTPase family. IF-2 subfamily.

It is found in the cytoplasm. Its function is as follows. One of the essential components for the initiation of protein synthesis. Protects formylmethionyl-tRNA from spontaneous hydrolysis and promotes its binding to the 30S ribosomal subunits. Also involved in the hydrolysis of GTP during the formation of the 70S ribosomal complex. This chain is Translation initiation factor IF-2, found in Burkholderia ambifaria (strain ATCC BAA-244 / DSM 16087 / CCUG 44356 / LMG 19182 / AMMD) (Burkholderia cepacia (strain AMMD)).